Reading from the N-terminus, the 652-residue chain is Engulfment and cell motility protein 3 (652 aa).

An ELMO domain is found at 307-479; sequence EQREQLQALR…VVREQLARTL (173 aa).

In terms of assembly, probably interacts directly with the SH3-domain of DOCK1 via its SH3-binding site. Part of a complex with DOCK1 and RAC1. Interacts with ADGRB3.

The protein localises to the cytoplasm. Its function is as follows. Involved in cytoskeletal rearrangements required for phagocytosis of apoptotic cells and cell motility. Acts in association with DOCK1 and CRK. Was initially proposed to be required in complex with DOCK1 to activate Rac Rho small GTPases. May enhance the guanine nucleotide exchange factor (GEF) activity of DOCK1. In Bos taurus (Bovine), this protein is Engulfment and cell motility protein 3 (ELMO3).